A 253-amino-acid polypeptide reads, in one-letter code: Probable transcriptional regulatory protein syc0529_d (253 aa).

It belongs to the TACO1 family.

Its subcellular location is the cytoplasm. The sequence is that of Probable transcriptional regulatory protein syc0529_d from Synechococcus sp. (strain ATCC 27144 / PCC 6301 / SAUG 1402/1) (Anacystis nidulans).